The following is a 238-amino-acid chain: ATP-dependent dethiobiotin synthetase BioD (238 aa).

Residue 12–17 (EVGKTV) coordinates ATP. Thr-16 contributes to the Mg(2+) binding site. The active site involves Lys-37. Residue Thr-41 participates in substrate binding. ATP is bound by residues Asp-50, 109 to 112 (EGAG), 170 to 171 (GS), and 200 to 202 (PAG). Positions 50 and 109 each coordinate Mg(2+).

It belongs to the dethiobiotin synthetase family. In terms of assembly, homodimer. Requires Mg(2+) as cofactor.

It localises to the cytoplasm. The enzyme catalyses (7R,8S)-7,8-diammoniononanoate + CO2 + ATP = (4R,5S)-dethiobiotin + ADP + phosphate + 3 H(+). It functions in the pathway cofactor biosynthesis; biotin biosynthesis; biotin from 7,8-diaminononanoate: step 1/2. Catalyzes a mechanistically unusual reaction, the ATP-dependent insertion of CO2 between the N7 and N8 nitrogen atoms of 7,8-diaminopelargonic acid (DAPA, also called 7,8-diammoniononanoate) to form a ureido ring. The chain is ATP-dependent dethiobiotin synthetase BioD from Streptomyces avermitilis (strain ATCC 31267 / DSM 46492 / JCM 5070 / NBRC 14893 / NCIMB 12804 / NRRL 8165 / MA-4680).